A 739-amino-acid polypeptide reads, in one-letter code: Platelet endothelial cell adhesion molecule (739 aa).

The N-terminal stretch at 1–27 (MQLRWTQRGMMWLGALLTLLLCSSLKG) is a signal peptide. Over 28 to 599 (QENSFTINSI…TVRVYLPLEK (572 aa)) the chain is Extracellular. 3 consecutive Ig-like C2-type domains span residues 35 to 120 (NSIH…EKTT), 145 to 213 (GGVV…IFSG), and 236 to 315 (PKFH…SKVS). Residues Asn-52, Asn-84, and Asn-151 are each glycosylated (N-linked (GlcNAc...) asparagine). A disulfide bridge links Cys-57 with Cys-109. 2 disulfide bridges follow: Cys-152–Cys-206 and Cys-256–Cys-304. N-linked (GlcNAc...) asparagine glycans are attached at residues Asn-301, Asn-320, Asn-356, Asn-371, Asn-435, Asn-446, Asn-453, Asn-550, and Asn-578. 3 Ig-like C2-type domains span residues 328–403 (PKLE…VQIT), 424–493 (GQTI…EVLR), and 499–590 (PVDE…NTLT). 3 disulfide bridges follow: Cys-347-Cys-386, Cys-431-Cys-476, and Cys-522-Cys-571. The helical transmembrane segment at 600–618 (GLIAVVVIGVIIVTLVLGA) threads the bilayer. Residues 619–739 (KCYFLKKAKA…SRTEGSLDGS (121 aa)) are Cytoplasmic-facing. Cys-620 carries S-palmitoyl cysteine lipidation. 2 short sequence motifs (ITIM motif) span residues 687-692 (VEYTEV) and 712-717 (TVYSEI). Tyr-689 and Tyr-714 each carry phosphotyrosine; by FER. Positions 708–730 (TETETVYSEIRKADPDFVENRYS) are membrane-bound segment which detaches upon phosphorylation. Residues 722 to 739 (PDFVENRYSRTEGSLDGS) are may play a role in cytoprotective signaling. A phosphoserine mark is found at Ser-730 and Ser-735.

Trans-homodimer (via Ig-like C2-type 1 and Ig-like C2-type 2 domains); trans-homodimerization is required for cell-cell interaction. Forms a complex with BDKRB2 and GNAQ. Interacts with BDKRB2 and GNAQ. Interacts with PTPN11; Tyr-714 is critical for PTPN11 recruitment. Interacts with FER. Interacts with CD177; the interaction is Ca(2+)-dependent; the interaction is direct. Phosphorylated on Ser and Tyr residues by src kinases after cellular activation. Upon activation, phosphorylated on Ser-730 which probably initiates the dissociation of the membrane-interaction segment (residues 708-730) from the cell membrane allowing the sequential phosphorylation of Tyr-714 and Tyr-689. Constitutively phosphorylated on Ser-735 in resting platelets. Phosphorylated on tyrosine residues by FER and FES in response to FCER1 activation. In endothelial cells Fyn mediates mechanical-force (stretch or pull) induced tyrosine phosphorylation. In terms of processing, palmitoylation by ZDHHC21 is necessary for cell surface expression in endothelial cells and enrichment in membrane rafts.

Its subcellular location is the cell membrane. It localises to the membrane raft. It is found in the cell junction. Its function is as follows. Cell adhesion molecule which is required for leukocyte transendothelial migration (TEM) under most inflammatory conditions. Tyr-689 plays a critical role in TEM and is required for efficient trafficking of PECAM1 to and from the lateral border recycling compartment (LBRC) and is also essential for the LBRC membrane to be targeted around migrating leukocytes. Trans-homophilic interaction may play a role in endothelial cell-cell adhesion via cell junctions. Heterophilic interaction with CD177 plays a role in transendothelial migration of neutrophils. Homophilic ligation of PECAM1 prevents macrophage-mediated phagocytosis of neighboring viable leukocytes by transmitting a detachment signal. Promotes macrophage-mediated phagocytosis of apoptotic leukocytes by tethering them to the phagocytic cells; PECAM1-mediated detachment signal appears to be disabled in apoptotic leukocytes. Modulates bradykinin receptor BDKRB2 activation. Regulates bradykinin- and hyperosmotic shock-induced ERK1/2 activation in endothelial cells. Induces susceptibility to atherosclerosis. The protein is Platelet endothelial cell adhesion molecule (PECAM1) of Bos taurus (Bovine).